The following is a 554-amino-acid chain: Outer envelope protein 61 (554 aa).

Over 1 to 525 (MFNGLMDPEM…GMEKAKKAKK (525 aa)) the chain is Cytoplasmic. TPR repeat units follow at residues 103–136 (AQML…LKEI) and 180–213 (VKAL…SPED). 2 disordered regions span residues 245–269 (TEEN…AQGV) and 395–439 (APAS…PSAP). Residues 254–263 (ENKKPSKEAN) show a composition bias toward basic and acidic residues. Over residues 412 to 423 (SLGASGSSSGNS) the composition is skewed to low complexity. Residues 526–546 (WLFGKGGLIFAILMLVLAMVL) form a helical membrane-spanning segment. The Lumenal segment spans residues 547 to 554 (HRLGYIGN).

In terms of assembly, interacts (via TPR region) with HSP70-1, but not with HSP90-2. Interacts with ERDJ2A and ERDJ2B. In the ER membrane, associates with ERDJ2 in membrane complexes of 140 and 200 kDa and specifically interacts with the HSP70 and HSP90 chaperones via its TPR domain. In terms of tissue distribution, ubiquitous. Highest expression in leaves and lowest in roots.

The protein localises to the endoplasmic reticulum membrane. The protein resides in the plastid. It is found in the chloroplast outer membrane. Plays a role in protein import into the endoplasmic reticulum (ER). May function as chaperone docking protein during post-translational protein translocation into the ER. Chaperone receptor mediating Hsp70-dependent protein targeting to chloroplasts. Interacts specifically with some chloroplast precursors, but not with mitochondrial precursors. Able to select precursors for delivery to the chloroplast translocase independently of Hsp70. The protein is Outer envelope protein 61 (OEP61) of Arabidopsis thaliana (Mouse-ear cress).